The sequence spans 677 residues: Pescadillo homolog (677 aa).

A BRCT domain is found at threonine 359–proline 468. The segment at leucine 472–lysine 677 is disordered. Acidic residues-rich tracts occupy residues glutamate 495–glycine 518, glutamate 529–valine 538, and alanine 545–glutamate 581. Residues threonine 582–glutamate 592 show a composition bias toward basic and acidic residues. The stretch at alanine 609–methionine 650 forms a coiled coil. Residues lysine 612 to lysine 623 show a composition bias toward basic residues. Residues lysine 624–lysine 635 show a composition bias toward basic and acidic residues.

It belongs to the pescadillo family. As to quaternary structure, component of the NOP7 complex, composed of erb1, nop7 and ytm1. The complex is held together by erb1, which interacts with nop7 via its N-terminal domain and with ytm1 via a high-affinity interaction between the seven-bladed beta-propeller domains of the 2 proteins. The NOP7 complex associates with the 66S pre-ribosome.

The protein localises to the nucleus. It localises to the nucleolus. Its subcellular location is the nucleoplasm. Functionally, component of the NOP7 complex, which is required for maturation of the 25S and 5.8S ribosomal RNAs and formation of the 60S ribosome. The polypeptide is Pescadillo homolog (nop7) (Emericella nidulans (strain FGSC A4 / ATCC 38163 / CBS 112.46 / NRRL 194 / M139) (Aspergillus nidulans)).